A 690-amino-acid polypeptide reads, in one-letter code: Elongation factor G (690 aa).

The 276-residue stretch at 8–283 (SRCRNIGIMA…AVVDFLPSPS (276 aa)) folds into the tr-type G domain. GTP contacts are provided by residues 17–24 (AHIDAGKT), 81–85 (DTPGH), and 135–138 (NKMD).

This sequence belongs to the TRAFAC class translation factor GTPase superfamily. Classic translation factor GTPase family. EF-G/EF-2 subfamily.

Its subcellular location is the cytoplasm. Catalyzes the GTP-dependent ribosomal translocation step during translation elongation. During this step, the ribosome changes from the pre-translocational (PRE) to the post-translocational (POST) state as the newly formed A-site-bound peptidyl-tRNA and P-site-bound deacylated tRNA move to the P and E sites, respectively. Catalyzes the coordinated movement of the two tRNA molecules, the mRNA and conformational changes in the ribosome. The chain is Elongation factor G from Anaplasma marginale (strain St. Maries).